A 153-amino-acid polypeptide reads, in one-letter code: Large ribosomal subunit protein uL15 (153 aa).

The tract at residues 21-41 (RGIGSGKGKTGGRGIKGQKSR) is disordered. A compositionally biased stretch (gly residues) spans 23–35 (IGSGKGKTGGRGI).

This sequence belongs to the universal ribosomal protein uL15 family. As to quaternary structure, part of the 50S ribosomal subunit.

Its function is as follows. Binds to the 23S rRNA. In Rickettsia rickettsii (strain Iowa), this protein is Large ribosomal subunit protein uL15.